Reading from the N-terminus, the 147-residue chain is Large ribosomal subunit protein uL16 (147 aa).

Basic residues predominate over residues 1 to 16 (MLMPKRVKRRRVHRGR). A disordered region spans residues 1–20 (MLMPKRVKRRRVHRGRMTGQ).

The protein belongs to the universal ribosomal protein uL16 family. As to quaternary structure, part of the 50S ribosomal subunit.

In terms of biological role, binds 23S rRNA and is also seen to make contacts with the A and possibly P site tRNAs. The protein is Large ribosomal subunit protein uL16 of Alkaliphilus metalliredigens (strain QYMF).